A 429-amino-acid polypeptide reads, in one-letter code: Threonine synthase (429 aa).

K108 carries the N6-(pyridoxal phosphate)lysine modification.

This sequence belongs to the threonine synthase family. The cofactor is pyridoxal 5'-phosphate.

The enzyme catalyses O-phospho-L-homoserine + H2O = L-threonine + phosphate. The protein operates within amino-acid biosynthesis; L-threonine biosynthesis; L-threonine from L-aspartate: step 5/5. Its function is as follows. Catalyzes the gamma-elimination of phosphate from L-phosphohomoserine and the beta-addition of water to produce L-threonine. The sequence is that of Threonine synthase (thrC) from Buchnera aphidicola subsp. Schizaphis graminum (strain Sg).